Reading from the N-terminus, the 381-residue chain is Alkanesulfonate monooxygenase (381 aa).

This sequence belongs to the SsuD family. In terms of assembly, homotetramer.

The catalysed reaction is an alkanesulfonate + FMNH2 + O2 = an aldehyde + FMN + sulfite + H2O + 2 H(+). Its function is as follows. Catalyzes the desulfonation of aliphatic sulfonates. This is Alkanesulfonate monooxygenase from Shigella flexneri serotype 5b (strain 8401).